The primary structure comprises 410 residues: Platelet-activating factor acetylhydrolase IB subunit alpha (410 aa).

The segment at 1 to 38 (MVLSQRQRDELNRAIADYLRSNGYEEAYSVFKKEAELD) is required for self-association and interaction with PAFAH1B2 and PAFAH1B3. The segment at 1–66 (MVLSQRQRDE…SVIRLQKKVM (66 aa)) is interaction with NDE1. The interval 1 to 102 (MVLSQRQRDE…EWIPRPPEKY (102 aa)) is interaction with NDEL1. A LisH domain is found at 7–39 (QRDELNRAIADYLRSNGYEEAYSVFKKEAELDM). N6-acetyllysine is present on K53. The stretch at 56 to 82 (TSVIRLQKKVMELESKLNEAKEEFTSG) forms a coiled coil. The interaction with dynein and dynactin stretch occupies residues 83–410 (GPLGQKRDPK…DQTVKVWECR (328 aa)). WD repeat units follow at residues 106–147 (GHRS…RTLK), 148–187 (GHTD…CIRT), 190–229 (GHDH…CVKT), 232–271 (GHRE…CKAE), 274–333 (EHEH…CLMT), 336–377 (GHDN…KTLN), and 379–410 (HEHF…WECR). Residue S109 is modified to Phosphoserine. Positions 367–409 (YKNKRCMKTLNAHEHFVTSLDFHKTAPYVVTGFVDQTVKVWEC) are interaction with DCX. The interval 388–410 (FHKTAPYVVTGFVDQTVKVWECR) is interaction with NDEL1.

It belongs to the WD repeat LIS1/nudF family. As to quaternary structure, can self-associate. Component of the cytosolic PAF-AH (I) heterotetrameric enzyme, which is composed of PAFAH1B1 (beta), PAFAH1B2 (alpha2) and PAFAH1B3 (alpha1) subunits. The catalytic activity of the enzyme resides in the alpha1 (PAFAH1B3) and alpha2 (PAFAH1B2) subunits, whereas the beta subunit (PAFAH1B1) has regulatory activity. Trimer formation is not essential for the catalytic activity. Interacts with the catalytic dimer of PAF-AH (I) heterotetrameric enzyme: interacts with PAFAH1B2 homodimer (alpha2/alpha2 homodimer), PAFAH1B3 homodimer (alpha1/alpha1 homodimer) and PAFAH1B2-PAFAH1B3 heterodimer (alpha2/alpha1 heterodimer). Interacts with DCX, dynein, dynactin, IQGAP1, KATNB1, NDE1, NDEL1, NUDC and RSN. Interacts with DISC1, and this interaction is enhanced by NDEL1. Interacts with DAB1 when DAB1 is phosphorylated in response to RELN/reelin signaling. Interacts with INTS13. Interacts with DCDC1.

It localises to the cytoplasm. Its subcellular location is the cytoskeleton. The protein localises to the microtubule organizing center. The protein resides in the centrosome. It is found in the spindle. It localises to the nucleus membrane. In terms of biological role, regulatory subunit (beta subunit) of the cytosolic type I platelet-activating factor (PAF) acetylhydrolase (PAF-AH (I)), an enzyme that catalyzes the hydrolyze of the acetyl group at the sn-2 position of PAF and its analogs and participates in PAF inactivation. Regulates the PAF-AH (I) activity in a catalytic dimer composition-dependent manner. Positively regulates the activity of the minus-end directed microtubule motor protein dynein. May enhance dynein-mediated microtubule sliding by targeting dynein to the microtubule plus end. Required for several dynein- and microtubule-dependent processes such as the maintenance of Golgi integrity, the peripheral transport of microtubule fragments and the coupling of the nucleus and centrosome. Required during brain development for the proliferation of neuronal precursors and the migration of newly formed neurons from the ventricular/subventricular zone toward the cortical plate. Neuronal migration involves a process called nucleokinesis, whereby migrating cells extend an anterior process into which the nucleus subsequently translocates. During nucleokinesis dynein at the nuclear surface may translocate the nucleus towards the centrosome by exerting force on centrosomal microtubules. Also required for proper activation of Rho GTPases and actin polymerization at the leading edge of locomoting cerebellar neurons and postmigratory hippocampal neurons in response to calcium influx triggered via NMDA receptors. May also play a role in other forms of cell locomotion including the migration of fibroblasts during wound healing. Required for dynein recruitment to microtubule plus ends and BICD2-bound cargos. May modulate the Reelin pathway through interaction of the PAF-AH (I) catalytic dimer with VLDLR. The chain is Platelet-activating factor acetylhydrolase IB subunit alpha from Pan troglodytes (Chimpanzee).